A 620-amino-acid chain; its full sequence is MSFDIAKYPTLALVDSTQELRLLPKESLPKLCDELRRYLLDSVSRSSGHFASGLGTVELTVALHYVYNTPFDQLIWDVGHQAYPHKILTGRRDKIGTIRQKGGLHPFPWRGESEYDVLSVGHSSTSISAGIGIAVAAEKEGKNRRTVCVIGDGAITAGMAFEAMNHAGDIRPDMLVVLNDNEMSISENVGALNNHLAQLLSGKLYSSLREGGKKVFSGVPPIKELLKRTEEHIKGMVVPGTLFEELGFNYIGPVDGHDVLGLITTLKNMRDLKGPQFLHIMTKKGRGYEPAEKDPITFHAVPKFDPSSGCLPKSSGGLPSYSKIFGDWLCETAAKDNKLMAITPAMREGSGMVEFSRKFPDRYFDVAIAEQHAVTFAAGLAIGGYKPIVAIYSTFLQRAYDQVLHDVAIQKLPVLFAIDRAGIVGADGQTHQGAFDLSYLRCIPEMVIMTPSDENECRQMLYTGYHYNDGPSAVRYPRGNAVGVELTPLEKLPIGKGIVKCRGEKLAILNFGTLMPEAAKVAESLNATLVDMRFVKPLDEALILEMAASHEALVTVEENAIMGGAGSGVNEVLMAHRKPVSVLNIGLPDFFIPQGTQEEMRAELGLDATGMEAKIKAWLA.

Thiamine diphosphate-binding positions include His80 and 121 to 123 (GHS). Mg(2+) is bound at residue Asp152. Residues 153 to 154 (GA), Asn181, Tyr288, and Glu370 each bind thiamine diphosphate. Asn181 provides a ligand contact to Mg(2+).

Belongs to the transketolase family. DXPS subfamily. In terms of assembly, homodimer. Mg(2+) serves as cofactor. Thiamine diphosphate is required as a cofactor.

The enzyme catalyses D-glyceraldehyde 3-phosphate + pyruvate + H(+) = 1-deoxy-D-xylulose 5-phosphate + CO2. It participates in metabolic intermediate biosynthesis; 1-deoxy-D-xylulose 5-phosphate biosynthesis; 1-deoxy-D-xylulose 5-phosphate from D-glyceraldehyde 3-phosphate and pyruvate: step 1/1. Its function is as follows. Catalyzes the acyloin condensation reaction between C atoms 2 and 3 of pyruvate and glyceraldehyde 3-phosphate to yield 1-deoxy-D-xylulose-5-phosphate (DXP). This Escherichia coli O6:K15:H31 (strain 536 / UPEC) protein is 1-deoxy-D-xylulose-5-phosphate synthase.